The following is a 262-amino-acid chain: Hydroxyethylthiazole kinase (262 aa).

Substrate is bound at residue Met-50. ATP is bound by residues Arg-125 and Thr-171. Residue Gly-198 coordinates substrate.

Belongs to the Thz kinase family. Requires Mg(2+) as cofactor.

It catalyses the reaction 5-(2-hydroxyethyl)-4-methylthiazole + ATP = 4-methyl-5-(2-phosphooxyethyl)-thiazole + ADP + H(+). The protein operates within cofactor biosynthesis; thiamine diphosphate biosynthesis; 4-methyl-5-(2-phosphoethyl)-thiazole from 5-(2-hydroxyethyl)-4-methylthiazole: step 1/1. Functionally, catalyzes the phosphorylation of the hydroxyl group of 4-methyl-5-beta-hydroxyethylthiazole (THZ). This is Hydroxyethylthiazole kinase from Shigella flexneri serotype 5b (strain 8401).